The sequence spans 727 residues: NADH-ubiquinone oxidoreductase 75 kDa subunit, mitochondrial (727 aa).

Residues 1 to 23 (MLRIPVRKALVGLSKSPKGCVRT) constitute a mitochondrion transit peptide. One can recognise a 2Fe-2S ferredoxin-type domain in the interval 30-108 (NLIEVFVDGQ…GWNILTNSEK (79 aa)). Positions 64, 75, and 78 each coordinate [2Fe-2S] cluster. K84 carries the N6-acetyllysine modification. C92 lines the [2Fe-2S] cluster pocket. One can recognise a 4Fe-4S His(Cys)3-ligated-type domain in the interval 108–147 (KSKKAREGVMEFLLANHPLDCPICDQGGECDLQDQSMMFG). 8 residues coordinate [4Fe-4S] cluster: H124, C128, C131, C137, C176, C179, C182, and C226. In terms of domain architecture, 4Fe-4S Mo/W bis-MGD-type spans 245 to 301 (TRKTESIDVMDAVGSNIVVSTRTGEVMRILPRMHEDINEEWISDKTRFAYDGLKRQR). N6-acetyllysine is present on residues K467, K499, and K709.

Belongs to the complex I 75 kDa subunit family. Core subunit of respiratory chain NADH dehydrogenase (Complex I) which is composed of 45 different subunits. This is the largest subunit of complex I and it is a component of the iron-sulfur (IP) fragment of the enzyme. Complex I associates with ubiquinol-cytochrome reductase complex (Complex III) to form supercomplexes. Interacts with MDM2 and AKAP1. Requires [2Fe-2S] cluster as cofactor. The cofactor is [4Fe-4S] cluster.

It is found in the mitochondrion inner membrane. It carries out the reaction a ubiquinone + NADH + 5 H(+)(in) = a ubiquinol + NAD(+) + 4 H(+)(out). In terms of biological role, core subunit of the mitochondrial membrane respiratory chain NADH dehydrogenase (Complex I) which catalyzes electron transfer from NADH through the respiratory chain, using ubiquinone as an electron acceptor. Essential for catalysing the entry and efficient transfer of electrons within complex I. Plays a key role in the assembly and stability of complex I and participates in the association of complex I with ubiquinol-cytochrome reductase complex (Complex III) to form supercomplexes. The polypeptide is NADH-ubiquinone oxidoreductase 75 kDa subunit, mitochondrial (NDUFS1) (Macaca fascicularis (Crab-eating macaque)).